The chain runs to 404 residues: Advanced glycosylation end product-specific receptor (404 aa).

Residues 1–22 (MAAGTAVGAWVLVLSLWGAVVG) form the signal peptide. Positions 23-116 (AQNITARIGE…KETKSNYRVR (94 aa)) constitute an Ig-like V-type domain. The Extracellular portion of the chain corresponds to 23 to 342 (AQNITARIGE…VGGSGLGTLA (320 aa)). 2 N-linked (GlcNAc...) asparagine glycosylation sites follow: asparagine 25 and asparagine 81. 2 disulfide bridges follow: cysteine 38–cysteine 99 and cysteine 144–cysteine 208. 2 consecutive Ig-like C2-type domains span residues 124 to 221 (PEIV…RALR) and 227 to 317 (PRVW…RAVS). Residues 343-363 (LALGILGGLGTAALLIGVILW) form a helical membrane-spanning segment. The Cytoplasmic segment spans residues 364–404 (QRRQRRGEERKAPENQEEEEERAELNQSEEPEAGESSTGGP). The segment at 367–404 (QRRGEERKAPENQEEEEERAELNQSEEPEAGESSTGGP) is disordered. Acidic residues predominate over residues 378 to 396 (NQEEEEERAELNQSEEPEA). Serine 391 is subject to Phosphoserine; by PKC/PRKCZ and ATM.

In terms of assembly, constitutive homodimer; disulfide-linked. Forms homooligomers. Interacts with S100A1 and APP. Interacts with S100B, S100A12 and S100A14. Interacts with TIRAP. Interacts with HMGB1. Interacts with LGP2; this interaction plays an important role in AGER-mediated pro-inflammatory responses and cytokine release. Interacts with double-strand break repair protein MRE11 which is a core component of the MRN complex. The interaction enhances MRE11 endonuclease activity and promotes DNA repair. Interacts with the MCM2-7 complex via interaction with complex member MCM2; the interaction is increased following DNA replication stress and stabilizes the MCM2-7 complex at replication forks. Interacts with longistatin, a protein from the saliva of the tick, Haemaphysalis longicornis; the interaction attenuates AGER-mediated production of reactive oxygen species (ROS), activation of NF-kappa-B and expression of adhesion molecules and cytokines in human endothelial cells. Post-translationally, phosphorylated on its cytoplasmic domain by PKCzeta/PRKCZ upon ligand binding. Phosphorylated by ATM following DNA damage. Targeted by the ubiquitin E3 ligase subunit FBXO10 to mediate its ubiquitination and degradation. Endothelial cells. Increased expression in pre-term labor and preeclampsia placentas compared to controls.

It is found in the cell membrane. The protein localises to the cell projection. The protein resides in the phagocytic cup. Its subcellular location is the early endosome. It localises to the nucleus. It is found in the secreted. Cell surface pattern recognition receptor that senses endogenous stress signals with a broad ligand repertoire including advanced glycation end products, S100 proteins, high-mobility group box 1 protein/HMGB1, amyloid beta/APP oligomers, nucleic acids, histones, phospholipids and glycosaminoglycans. Advanced glycosylation end products are nonenzymatically glycosylated proteins which accumulate in vascular tissue in aging and at an accelerated rate in diabetes. These ligands accumulate at inflammatory sites during the pathogenesis of various diseases including diabetes, vascular complications, neurodegenerative disorders and cancers, and RAGE transduces their binding into pro-inflammatory responses. Upon ligand binding, uses TIRAP and MYD88 as adapters to transduce the signal ultimately leading to the induction of inflammatory cytokines IL6, IL8 and TNFalpha through activation of NF-kappa-B. Interaction with S100A12 on endothelium, mononuclear phagocytes, and lymphocytes triggers cellular activation, with generation of key pro-inflammatory mediators. Interaction with S100B after myocardial infarction may play a role in myocyte apoptosis by activating ERK1/2 and p53/TP53 signaling. Contributes to the translocation of amyloid-beta peptide (ABPP) across the cell membrane from the extracellular to the intracellular space in cortical neurons. ABPP-initiated RAGE signaling, especially stimulation of p38 mitogen-activated protein kinase (MAPK), has the capacity to drive a transport system delivering ABPP as a complex with RAGE to the intraneuronal space. Participates in endothelial albumin transcytosis together with HMGB1 through the RAGE/SRC/Caveolin-1 pathway, leading to endothelial hyperpermeability. Mediates the loading of HMGB1 in extracellular vesicles (EVs) that shuttle HMGB1 to hepatocytes by transferrin-mediated endocytosis and subsequently promote hepatocyte pyroptosis by activating the NLRP3 inflammasome. Binds to DNA and promotes extracellular hypomethylated DNA (CpG DNA) uptake by cells via the endosomal route to activate inflammatory responses. Mediates phagocytosis by non-professional phagocytes (NPP) and this is enhanced by binding to ligands including RNA, DNA, HMGB1 and histones. Promotes NPP-mediated phagocytosis of Saccharomyces cerevisiae spores by binding to RNA attached to the spore wall. Also promotes NPP-mediated phagocytosis of apoptotic cells. Following DNA damage, recruited to DNA double-strand break sites where it colocalizes with the MRN repair complex via interaction with double-strand break repair protein MRE11. Enhances the endonuclease activity of MRE11, promoting the end resection of damaged DNA. Promotes DNA damage repair in trophoblasts which enhances trophoblast invasion and contributes to placental development and maintenance. Protects cells from DNA replication stress by localizing to damaged replication forks where it stabilizes the MCM2-7 complex and promotes faithful progression of the replication fork. Mediates the production of reactive oxygen species (ROS) in human endothelial cells. This is Advanced glycosylation end product-specific receptor (AGER) from Homo sapiens (Human).